A 121-amino-acid polypeptide reads, in one-letter code: Ribonuclease P protein component (121 aa).

Belongs to the RnpA family. In terms of assembly, consists of a catalytic RNA component (M1 or rnpB) and a protein subunit.

The enzyme catalyses Endonucleolytic cleavage of RNA, removing 5'-extranucleotides from tRNA precursor.. Functionally, RNaseP catalyzes the removal of the 5'-leader sequence from pre-tRNA to produce the mature 5'-terminus. It can also cleave other RNA substrates such as 4.5S RNA. The protein component plays an auxiliary but essential role in vivo by binding to the 5'-leader sequence and broadening the substrate specificity of the ribozyme. The polypeptide is Ribonuclease P protein component (Neisseria meningitidis serogroup A / serotype 4A (strain DSM 15465 / Z2491)).